Reading from the N-terminus, the 336-residue chain is 4-hydroxy-3-methylbut-2-enyl diphosphate reductase (336 aa).

Cys-37 contacts [4Fe-4S] cluster. Residues His-66 and His-99 each coordinate (2E)-4-hydroxy-3-methylbut-2-enyl diphosphate. 2 residues coordinate dimethylallyl diphosphate: His-66 and His-99. His-66 and His-99 together coordinate isopentenyl diphosphate. Cys-121 contributes to the [4Fe-4S] cluster binding site. His-149 lines the (2E)-4-hydroxy-3-methylbut-2-enyl diphosphate pocket. His-149 is a dimethylallyl diphosphate binding site. His-149 contacts isopentenyl diphosphate. Glu-151 acts as the Proton donor in catalysis. Residue Thr-189 coordinates (2E)-4-hydroxy-3-methylbut-2-enyl diphosphate. Cys-219 is a [4Fe-4S] cluster binding site. Residues Ser-247, Ser-248, Asn-249, and Ser-292 each coordinate (2E)-4-hydroxy-3-methylbut-2-enyl diphosphate. Residues Ser-247, Ser-248, Asn-249, and Ser-292 each contribute to the dimethylallyl diphosphate site. 4 residues coordinate isopentenyl diphosphate: Ser-247, Ser-248, Asn-249, and Ser-292.

It belongs to the IspH family. Requires [4Fe-4S] cluster as cofactor.

The enzyme catalyses isopentenyl diphosphate + 2 oxidized [2Fe-2S]-[ferredoxin] + H2O = (2E)-4-hydroxy-3-methylbut-2-enyl diphosphate + 2 reduced [2Fe-2S]-[ferredoxin] + 2 H(+). It catalyses the reaction dimethylallyl diphosphate + 2 oxidized [2Fe-2S]-[ferredoxin] + H2O = (2E)-4-hydroxy-3-methylbut-2-enyl diphosphate + 2 reduced [2Fe-2S]-[ferredoxin] + 2 H(+). The protein operates within isoprenoid biosynthesis; dimethylallyl diphosphate biosynthesis; dimethylallyl diphosphate from (2E)-4-hydroxy-3-methylbutenyl diphosphate: step 1/1. Its pathway is isoprenoid biosynthesis; isopentenyl diphosphate biosynthesis via DXP pathway; isopentenyl diphosphate from 1-deoxy-D-xylulose 5-phosphate: step 6/6. Functionally, catalyzes the conversion of 1-hydroxy-2-methyl-2-(E)-butenyl 4-diphosphate (HMBPP) into a mixture of isopentenyl diphosphate (IPP) and dimethylallyl diphosphate (DMAPP). Acts in the terminal step of the DOXP/MEP pathway for isoprenoid precursor biosynthesis. The sequence is that of 4-hydroxy-3-methylbut-2-enyl diphosphate reductase from Rhodococcus jostii (strain RHA1).